The chain runs to 251 residues: Vitamin B12 import ATP-binding protein BtuD (251 aa).

The ABC transporter domain maps to 2-236 (IRVNSLQVDS…EVLQSVFGTS (235 aa)). 30–37 (GPNGCGKS) contacts ATP.

The protein belongs to the ABC transporter superfamily. Vitamin B12 importer (TC 3.A.1.13.1) family. The complex is composed of two ATP-binding proteins (BtuD), two transmembrane proteins (BtuC) and a solute-binding protein (BtuF).

The protein localises to the cell inner membrane. It carries out the reaction an R-cob(III)alamin(out) + ATP + H2O = an R-cob(III)alamin(in) + ADP + phosphate + H(+). In terms of biological role, part of the ABC transporter complex BtuCDF involved in vitamin B12 import. Responsible for energy coupling to the transport system. In Vibrio cholerae serotype O1 (strain ATCC 39541 / Classical Ogawa 395 / O395), this protein is Vitamin B12 import ATP-binding protein BtuD.